A 68-amino-acid chain; its full sequence is MKTQFAIFLITLVLFQMFSQSDAILQDIWNGIKNLFGKRGLGDHDDLDELFDGEISQADIDFLKEIMQ.

An N-terminal signal peptide occupies residues 1 to 23; the sequence is MKTQFAIFLITLVLFQMFSQSDA. F36 is modified (phenylalanine amide). A propeptide spanning residues 37–68 is cleaved from the precursor; sequence GKRGLGDHDDLDELFDGEISQADIDFLKEIMQ.

It belongs to the non-disulfide-bridged peptide (NDBP) superfamily. Short antimicrobial peptide (group 4) family. In terms of tissue distribution, expressed by the venom gland.

It localises to the secreted. Peptide with unknown function. Does not show antimicrobial activity against the Gram-positive, and Gram-negative bacteria tested, as well as against the fungus C.albicans. This chain is Peptide Smp13, found in Scorpio palmatus (Israeli golden scorpion).